Here is a 191-residue protein sequence, read N- to C-terminus: Probable calcium-binding protein CML8 (191 aa).

The interval 1 to 41 (MASKYRGYYHDEASSAAGGGGGGGGGDGYRREKQVRKKRLT) is disordered. The segment covering 17-27 (AGGGGGGGGGD) has biased composition (gly residues). EF-hand domains follow at residues 43–78 (QKRK…LGFE), 79–114 (MTPE…KMGE), 116–151 (DARE…TGEP), and 152–187 (FTLD…IGFG). Positions 56, 58, 60, 62, 67, 92, 94, 96, 98, 103, 129, 131, 133, 135, 140, 165, 167, 169, 171, and 176 each coordinate Ca(2+).

Potential calcium sensor. The chain is Probable calcium-binding protein CML8 (CML8) from Oryza sativa subsp. japonica (Rice).